The following is a 542-amino-acid chain: Chaperonin GroEL (542 aa).

ATP contacts are provided by residues 29–32 (TLGP), 86–90 (DGTTT), glycine 413, 476–478 (NAA), and aspartate 492. Residues 522–542 (PDENGPAAVPDMGMGGMGGMM) are disordered.

The protein belongs to the chaperonin (HSP60) family. As to quaternary structure, forms a cylinder of 14 subunits composed of two heptameric rings stacked back-to-back. Interacts with the co-chaperonin GroES.

Its subcellular location is the cytoplasm. The catalysed reaction is ATP + H2O + a folded polypeptide = ADP + phosphate + an unfolded polypeptide.. In terms of biological role, together with its co-chaperonin GroES, plays an essential role in assisting protein folding. The GroEL-GroES system forms a nano-cage that allows encapsulation of the non-native substrate proteins and provides a physical environment optimized to promote and accelerate protein folding. The protein is Chaperonin GroEL of Listeria monocytogenes serotype 4b (strain CLIP80459).